A 94-amino-acid polypeptide reads, in one-letter code: Integration host factor subunit beta (94 aa).

This sequence belongs to the bacterial histone-like protein family. Heterodimer of an alpha and a beta chain.

Its function is as follows. This protein is one of the two subunits of integration host factor, a specific DNA-binding protein that functions in genetic recombination as well as in transcriptional and translational control. This is Integration host factor subunit beta from Citrobacter koseri (strain ATCC BAA-895 / CDC 4225-83 / SGSC4696).